The primary structure comprises 455 residues: Golgi pH regulator (455 aa).

4 helical membrane passes run I46–L66, L79–V99, L111–F131, and V150–P170. N180 and N243 each carry an N-linked (GlcNAc...) asparagine glycan. 4 helical membrane passes run G290–F310, I343–L363, V378–M398, and W425–H445.

This sequence belongs to the Golgi pH regulator (TC 1.A.38) family. As to quaternary structure, homotrimer.

The protein resides in the golgi apparatus membrane. The enzyme catalyses iodide(out) = iodide(in). It catalyses the reaction chloride(in) = chloride(out). The catalysed reaction is bromide(in) = bromide(out). It carries out the reaction fluoride(in) = fluoride(out). In terms of biological role, voltage-gated channel that enables the transfer of anions such as iodide, chloride, bromide and fluoride which may function in counter-ion conductance and participates in Golgi acidification. This Salmo salar (Atlantic salmon) protein is Golgi pH regulator.